A 342-amino-acid polypeptide reads, in one-letter code: Phosphate acyltransferase (342 aa).

Belongs to the PlsX family. As to quaternary structure, homodimer. Probably interacts with PlsY.

It localises to the cytoplasm. The catalysed reaction is a fatty acyl-[ACP] + phosphate = an acyl phosphate + holo-[ACP]. It functions in the pathway lipid metabolism; phospholipid metabolism. In terms of biological role, catalyzes the reversible formation of acyl-phosphate (acyl-PO(4)) from acyl-[acyl-carrier-protein] (acyl-ACP). This enzyme utilizes acyl-ACP as fatty acyl donor, but not acyl-CoA. In Shewanella sediminis (strain HAW-EB3), this protein is Phosphate acyltransferase.